We begin with the raw amino-acid sequence, 270 residues long: Formamidopyrimidine-DNA glycosylase (270 aa).

Pro2 serves as the catalytic Schiff-base intermediate with DNA. Glu3 functions as the Proton donor in the catalytic mechanism. Lys58 acts as the Proton donor; for beta-elimination activity in catalysis. DNA is bound by residues His91, Arg109, and Arg151. Residues Gln236 to Ser270 form an FPG-type zinc finger. Catalysis depends on Arg260, which acts as the Proton donor; for delta-elimination activity.

This sequence belongs to the FPG family. Monomer. Requires Zn(2+) as cofactor.

The catalysed reaction is Hydrolysis of DNA containing ring-opened 7-methylguanine residues, releasing 2,6-diamino-4-hydroxy-5-(N-methyl)formamidopyrimidine.. It carries out the reaction 2'-deoxyribonucleotide-(2'-deoxyribose 5'-phosphate)-2'-deoxyribonucleotide-DNA = a 3'-end 2'-deoxyribonucleotide-(2,3-dehydro-2,3-deoxyribose 5'-phosphate)-DNA + a 5'-end 5'-phospho-2'-deoxyribonucleoside-DNA + H(+). Involved in base excision repair of DNA damaged by oxidation or by mutagenic agents. Acts as a DNA glycosylase that recognizes and removes damaged bases. Has a preference for oxidized purines, such as 7,8-dihydro-8-oxoguanine (8-oxoG). Has AP (apurinic/apyrimidinic) lyase activity and introduces nicks in the DNA strand. Cleaves the DNA backbone by beta-delta elimination to generate a single-strand break at the site of the removed base with both 3'- and 5'-phosphates. This chain is Formamidopyrimidine-DNA glycosylase, found in Psychromonas ingrahamii (strain DSM 17664 / CCUG 51855 / 37).